Here is a 132-residue protein sequence, read N- to C-terminus: ATP synthase epsilon chain (132 aa).

The protein belongs to the ATPase epsilon chain family. In terms of assembly, F-type ATPases have 2 components, CF(1) - the catalytic core - and CF(0) - the membrane proton channel. CF(1) has five subunits: alpha(3), beta(3), gamma(1), delta(1), epsilon(1). CF(0) has three main subunits: a, b and c.

Its subcellular location is the cell membrane. In terms of biological role, produces ATP from ADP in the presence of a proton gradient across the membrane. In Bacillus caldotenax, this protein is ATP synthase epsilon chain (atpC).